A 612-amino-acid chain; its full sequence is Membrane protein insertase YidC (612 aa).

7 helical membrane passes run 4–24 (NTII…YLNH), 329–349 (LVPL…IPIF), 358–378 (VNLG…LFPL), 434–454 (ILLQ…AIGL), 484–504 (FLGN…ILNT), 524–544 (LTMY…PAGL), and 546–566 (YYYL…RGLV).

This sequence belongs to the OXA1/ALB3/YidC family. Type 1 subfamily. Interacts with the Sec translocase complex via SecD. Specifically interacts with transmembrane segments of nascent integral membrane proteins during membrane integration.

The protein localises to the cell inner membrane. Its function is as follows. Required for the insertion and/or proper folding and/or complex formation of integral membrane proteins into the membrane. Involved in integration of membrane proteins that insert both dependently and independently of the Sec translocase complex, as well as at least some lipoproteins. Aids folding of multispanning membrane proteins. This is Membrane protein insertase YidC from Azobacteroides pseudotrichonymphae genomovar. CFP2.